We begin with the raw amino-acid sequence, 303 residues long: Coenzyme PQQ synthesis protein B (303 aa).

It belongs to the PqqB family.

It participates in cofactor biosynthesis; pyrroloquinoline quinone biosynthesis. Functionally, may be involved in the transport of PQQ or its precursor to the periplasm. The polypeptide is Coenzyme PQQ synthesis protein B (Acinetobacter baumannii (strain SDF)).